Reading from the N-terminus, the 245-residue chain is tRNA1(Val) (adenine(37)-N6)-methyltransferase (245 aa).

It belongs to the methyltransferase superfamily. tRNA (adenine-N(6)-)-methyltransferase family.

Its subcellular location is the cytoplasm. It catalyses the reaction adenosine(37) in tRNA1(Val) + S-adenosyl-L-methionine = N(6)-methyladenosine(37) in tRNA1(Val) + S-adenosyl-L-homocysteine + H(+). Specifically methylates the adenine in position 37 of tRNA(1)(Val) (anticodon cmo5UAC). In Escherichia coli O139:H28 (strain E24377A / ETEC), this protein is tRNA1(Val) (adenine(37)-N6)-methyltransferase.